A 152-amino-acid polypeptide reads, in one-letter code: Deoxyuridine 5'-triphosphate nucleotidohydrolase (152 aa).

Substrate is bound by residues 71 to 73 (RSG), Asn-84, 88 to 90 (LID), and Met-98.

Belongs to the dUTPase family. Mg(2+) serves as cofactor.

It carries out the reaction dUTP + H2O = dUMP + diphosphate + H(+). It functions in the pathway pyrimidine metabolism; dUMP biosynthesis; dUMP from dCTP (dUTP route): step 2/2. In terms of biological role, this enzyme is involved in nucleotide metabolism: it produces dUMP, the immediate precursor of thymidine nucleotides and it decreases the intracellular concentration of dUTP so that uracil cannot be incorporated into DNA. The chain is Deoxyuridine 5'-triphosphate nucleotidohydrolase from Shewanella pealeana (strain ATCC 700345 / ANG-SQ1).